A 770-amino-acid chain; its full sequence is Disabled homolog 2 (770 aa).

The span at 1-16 (MSNEVETSATNGQPDQ) shows a compositional bias: polar residues. A disordered region spans residues 1–38 (MSNEVETSATNGQPDQQAAPKAPSKKEKKKGPEKTDEY). S2 is subject to N-acetylserine. S2 bears the Phosphoserine mark. The 152-residue stretch at 45-196 (GDGVKYKAKL…KAVENGSEAL (152 aa)) folds into the PID domain. Position 170 is a phosphotyrosine (Y170). Phosphoserine is present on S193. Residues 230–447 (ESKDILLVDL…KPGRGRRTAK (218 aa)) form a required for localization to clathrin-coated pits region. Disordered regions lie at residues 284 to 482 (LNFF…LQPN) and 604 to 629 (VSTQ…AGPP). 2 short sequence motifs (DPF) span residues 293–295 (DPF) and 298–300 (DPF). Over residues 302 to 313 (QPDQSTPSSFDS) the composition is skewed to polar residues. 2 positions are modified to phosphoserine; in mitosis: S326 and S328. Residues 366-396 (FSSSQTQPAVRTQNGVSEREQNGFSVKSSPN) are compositionally biased toward polar residues. Residue S401 is modified to Phosphoserine. Composition is skewed to polar residues over residues 407 to 425 (SIQN…SSPH), 466 to 480 (PSGQ…TALQ), and 604 to 616 (VSTQ…SSLL). Positions 604–732 (VSTQPPSMHS…SLPVTKSTDN (129 aa)) are sufficient for interaction with GRB2. The interval 619 to 627 (PPQPPPRAG) is required for interaction with CSK. The interval 649–770 (KDVKEMFKDF…YRDPFGNPFA (122 aa)) is required for interaction with MYO6. Residues 663–671 (PPAVPARKG) form a required for interaction with GRB2 and CSK region. Phosphoserine occurs at positions 675, 723, and 729. Positions 709 to 725 (NKINEPPKPAPRQVSLP) are sufficient for interaction with SH3KBP1 SH3 domain. A disordered region spans residues 742 to 770 (SFGSSQASVASSQPVSSEMYRDPFGNPFA). Positions 745 to 758 (SSQASVASSQPVSS) are enriched in low complexity.

Interacts (via NPXY motif) with DAB2 (via PID domain). Can interact (via PID domain) with LDLR, APP, APLP1 and APLP2, and weakly with INPP5D (via NPXY motifs); the interaction is impaired by tyrosine phosphorylation of the respective NPXY motifs. Can weakly interact (via PID domain) with LRP1 (via NPXY motif); the interaction is enhanced by tyrosine phosphorylation of the NPXY motif. Interacts with LRP2 (via NPXY motif); the interaction is not affected by tyrosine phosphorylation of the NPXY motif. Interacts with clathrin; in vitro can assemble clathrin triskelia into polyhedral coats. Interacts with AP2A2, ITGB1, ITGB3, ITGB5, PIAS2, DAB2IP, NOSTRIN, FCHO1, DVL3, EPS15, ITSN1 and EPS15L1. Interacts with SH3KBP1 (via SH3 domains). Interacts with GRB2; competes with SOS1 for binding to GRB2 and the interaction is enhanced by EGF and NT-3 stimulation. Interacts with MAP3K7; the interaction is induced by TGF-beta stimulation and may mediate TGF-beta stimulated JNK activation. Interacts with AXIN1 and PPP1CA; the interactions are mutually exclusive. Interacts with the globular tail of MYO6. Interacts (via DPF motifs) with FCHO2; the interaction is direct and required for DAB2-mediated LDLR endocytosis. Interacts with LRP6; the interaction involves LRP6 phosphorylation by CK2 and sequesters LRP6 towards clathrin-mediated endocytosis. Associates with the TGF-beta receptor complex. Interacts with SMAD2 and SMAD3; the interactions are enhanced upon TGF-beta stimulation. Interacts with GRB2; the interaction is enhanced by EGF and NT-3 stimulation. Interacts with SRC; the interaction is enhanced by EGF stimulation. Phosphorylated. Phosphorylation during mitosis is leading to membrane displacement. As to expression, expressed in deep invaginations, inclusion cysts and the surface epithelial cells of the ovary. Also expressed in breast epithelial cells, spleen, thymus, prostate, testis, macrophages, fibroblasts, lung epithelial cells, placenta, brain stem, heart and small intestine. Expressed in kidney proximal tubular epithelial cells (at protein level).

Its subcellular location is the cytoplasm. It is found in the cytoplasmic vesicle. The protein localises to the clathrin-coated vesicle membrane. It localises to the membrane. The protein resides in the clathrin-coated pit. Adapter protein that functions as a clathrin-associated sorting protein (CLASP) required for clathrin-mediated endocytosis of selected cargo proteins. Can bind and assemble clathrin, and binds simultaneously to phosphatidylinositol 4,5-bisphosphate (PtdIns(4,5)P2) and cargos containing non-phosphorylated NPXY internalization motifs, such as the LDL receptor, to recruit them to clathrin-coated pits. Can function in clathrin-mediated endocytosis independently of the AP-2 complex. Involved in endocytosis of integrin beta-1; this function seems to redundant with the AP-2 complex and seems to require DAB2 binding to endocytosis accessory EH domain-containing proteins such as EPS15, EPS15L1 and ITSN1. Involved in endocytosis of cystic fibrosis transmembrane conductance regulator/CFTR. Involved in endocytosis of megalin/LRP2 lipoprotein receptor during embryonal development. Required for recycling of the TGF-beta receptor. Involved in CFTR trafficking to the late endosome. Involved in several receptor-mediated signaling pathways. Involved in TGF-beta receptor signaling and facilitates phosphorylation of the signal transducer SMAD2. Mediates TFG-beta-stimulated JNK activation. May inhibit the canoniocal Wnt/beta-catenin signaling pathway by stabilizing the beta-catenin destruction complex through a competing association with axin preventing its dephosphorylation through protein phosphatase 1 (PP1). Sequesters LRP6 towards clathrin-mediated endocytosis, leading to inhibition of Wnt/beta-catenin signaling. May activate non-canonical Wnt signaling. In cell surface growth factor/Ras signaling pathways proposed to inhibit ERK activation by interrupting the binding of GRB2 to SOS1 and to inhibit SRC by preventing its activating phosphorylation at 'Tyr-419'. Proposed to be involved in modulation of androgen receptor (AR) signaling mediated by SRC activation; seems to compete with AR for interaction with SRC. Plays a role in the CSF-1 signal transduction pathway. Plays a role in cellular differentiation. Involved in cell positioning and formation of visceral endoderm (VE) during embryogenesis and proposed to be required in the VE to respond to Nodal signaling coming from the epiblast. Required for the epithelial to mesenchymal transition, a process necessary for proper embryonic development. May be involved in myeloid cell differentiation and can induce macrophage adhesion and spreading. May act as a tumor suppressor. The chain is Disabled homolog 2 (DAB2) from Homo sapiens (Human).